Here is a 127-residue protein sequence, read N- to C-terminus: Cytochrome b-c1 complex subunit 7, mitochondrial (127 aa).

This sequence belongs to the UQCRB/QCR7 family. In terms of assembly, component of the ubiquinol-cytochrome c oxidoreductase (cytochrome b-c1 complex, complex III, CIII), a multisubunit enzyme composed of 10 subunits. The complex is composed of 3 respiratory subunits cytochrome b (COB), cytochrome c1 (CYT1) and Rieske protein (RIP1), 2 core protein subunits COR1 and QCR2, and 5 low-molecular weight protein subunits QCR6, QCR7, QCR8, QCR9 and QCR10. The complex exists as an obligatory dimer and forms supercomplexes (SCs) in the inner mitochondrial membrane with a monomer or a dimer of cytochrome c oxidase (complex IV, CIV), resulting in 2 different assemblies (supercomplexes III(2)IV and III(2)IV(2)).

The protein resides in the mitochondrion inner membrane. Its function is as follows. Component of the ubiquinol-cytochrome c oxidoreductase, a multisubunit transmembrane complex that is part of the mitochondrial electron transport chain which drives oxidative phosphorylation. Plays an important role in the uptake of multiple carbon sources such acetate, lactate, amino acids or GlcNAc present in different host niches. This is Cytochrome b-c1 complex subunit 7, mitochondrial from Candida albicans (strain SC5314 / ATCC MYA-2876) (Yeast).